The chain runs to 90 residues: Co-chaperonin GroES (90 aa).

Belongs to the GroES chaperonin family. In terms of assembly, heptamer of 7 subunits arranged in a ring. Interacts with the chaperonin GroEL.

It localises to the cytoplasm. Together with the chaperonin GroEL, plays an essential role in assisting protein folding. The GroEL-GroES system forms a nano-cage that allows encapsulation of the non-native substrate proteins and provides a physical environment optimized to promote and accelerate protein folding. GroES binds to the apical surface of the GroEL ring, thereby capping the opening of the GroEL channel. In Bacteroides thetaiotaomicron (strain ATCC 29148 / DSM 2079 / JCM 5827 / CCUG 10774 / NCTC 10582 / VPI-5482 / E50), this protein is Co-chaperonin GroES.